The primary structure comprises 521 residues: UDP-N-acetylmuramate--L-alanine ligase (521 aa).

Residue 136–142 (GAHGKTT) participates in ATP binding.

It belongs to the MurCDEF family.

Its subcellular location is the cytoplasm. It carries out the reaction UDP-N-acetyl-alpha-D-muramate + L-alanine + ATP = UDP-N-acetyl-alpha-D-muramoyl-L-alanine + ADP + phosphate + H(+). Its pathway is cell wall biogenesis; peptidoglycan biosynthesis. Functionally, cell wall formation. The polypeptide is UDP-N-acetylmuramate--L-alanine ligase (Bifidobacterium adolescentis (strain ATCC 15703 / DSM 20083 / NCTC 11814 / E194a)).